The chain runs to 926 residues: Beta-mannosidase A (926 aa).

The N-terminal stretch at 1-21 is a signal peptide; the sequence is MHVKAETVLALLTPAPPSVVG. 5 N-linked (GlcNAc...) asparagine glycosylation sites follow: asparagine 40, asparagine 242, asparagine 277, asparagine 311, and asparagine 342. Glutamate 474 serves as the catalytic Proton donor. 10 N-linked (GlcNAc...) asparagine glycosylation sites follow: asparagine 532, asparagine 603, asparagine 626, asparagine 653, asparagine 733, asparagine 756, asparagine 785, asparagine 793, asparagine 819, and asparagine 905.

The protein belongs to the glycosyl hydrolase 2 family. Beta-mannosidase A subfamily. Homodimer.

Its subcellular location is the secreted. The enzyme catalyses Hydrolysis of terminal, non-reducing beta-D-mannose residues in beta-D-mannosides.. It functions in the pathway glycan metabolism; N-glycan degradation. In terms of biological role, exoglycosidase that cleaves the single beta-linked mannose residue from the non-reducing end of beta-mannosidic oligosaccharides of various complexity and length. Involved in the degradation of polymeric mannan and galactomannan. This Aspergillus fumigatus (strain ATCC MYA-4609 / CBS 101355 / FGSC A1100 / Af293) (Neosartorya fumigata) protein is Beta-mannosidase A (mndA).